We begin with the raw amino-acid sequence, 262 residues long: MRQMWNGWLLALQLFTVIPIRRSIEWNDIHVRWLVRSMPLAGAAIGALAAGTYALCSMFSFGTPLFLALFLLWLGIWLAGGLHADGWMDVSDAFFSYRDAKRRQQIMSDSRVGAFAVLSLACLLSFRWLFLYETIKAEIPPALFVAIPLLSRSGAAWLLSVGKLAKSTGMAASVREYISWRDAVWALVLAFLALSLLLVFGGVPVWTSAALAVAMALLALGAKPWVEKQFGGVTGDVLGALIEGGETLLWGVVWLLHSSAMG.

A run of 7 helical transmembrane segments spans residues 37–57 (SMPL…ALCS), 58–78 (MFSF…GIWL), 112–132 (VGAF…LFLY), 139–159 (IPPA…AWLL), 183–203 (AVWA…FGGV), 205–225 (VWTS…AKPW), and 237–257 (VLGA…WLLH).

The protein belongs to the CobS family. The cofactor is Mg(2+).

It localises to the cell membrane. The enzyme catalyses alpha-ribazole + adenosylcob(III)inamide-GDP = adenosylcob(III)alamin + GMP + H(+). It carries out the reaction alpha-ribazole 5'-phosphate + adenosylcob(III)inamide-GDP = adenosylcob(III)alamin 5'-phosphate + GMP + H(+). The protein operates within cofactor biosynthesis; adenosylcobalamin biosynthesis; adenosylcobalamin from cob(II)yrinate a,c-diamide: step 7/7. Its function is as follows. Joins adenosylcobinamide-GDP and alpha-ribazole to generate adenosylcobalamin (Ado-cobalamin). Also synthesizes adenosylcobalamin 5'-phosphate from adenosylcobinamide-GDP and alpha-ribazole 5'-phosphate. The chain is Adenosylcobinamide-GDP ribazoletransferase from Geobacillus thermodenitrificans (strain NG80-2).